Consider the following 558-residue polypeptide: Zeta-carotene desaturase, chloroplastic/chromoplastic (558 aa).

Residues 1–27 (MASSVVFAATGSLSVPPLKSRRFYVNS) constitute a chloroplast and chromoplast transit peptide.

It belongs to the zeta carotene desaturase family. Requires decylplastoquinone as cofactor. It depends on 6-decylubiquinone as a cofactor. Highly expressed in leaves. Expressed at low levels in flowers and siliques.

The protein localises to the plastid. It is found in the chloroplast. The protein resides in the chromoplast. The enzyme catalyses 9,9'-di-cis-zeta-carotene + 2 a quinone = 7,7',9,9'-tetra-cis-lycopene + 2 a quinol. It participates in carotenoid biosynthesis; lycopene biosynthesis. Its function is as follows. Plays a crucial role in plant growth and development. Is essential for the biosynthesis of carotenoids. Carotenoids are involved in different physiological processes, including coloration, photoprotection, biosynthesis of abscisic acid (ABA) and chloroplast biogenesis. Catalyzes the conversion of zeta-carotene to lycopene via the intermediary of neurosporene. It carries out two consecutive desaturations (introduction of double bonds) at positions C-7 and C-7'. Shows stereoselectivity toward trans C15-C15'zeta-carotene double bond. The zeta-carotene produced by the phytoene desaturase PDS has a C15-C15' double bond in the cis configuration and it requires isomerization before being recognized as substrate by ZDS. The main product is 7,9,7',9'-tetra-cis-lycopene (pro-lycopene). The polypeptide is Zeta-carotene desaturase, chloroplastic/chromoplastic (Arabidopsis thaliana (Mouse-ear cress)).